The chain runs to 419 residues: Carboxypeptidase A1 (419 aa).

The first 16 residues, 1–16 (MKRLLVLSVLLAAVFG), serve as a signal peptide directing secretion. A propeptide spans 17–110 (NENFVGHQVL…KQQMSAFQAR (94 aa)) (activation peptide). Residues 121–414 (TYHTLDEIYE…LALLTIMDHT (294 aa)) enclose the Peptidase M14 domain. Positions 179 and 182 each coordinate Zn(2+). Substrate-binding positions include 179 to 182 (HSRE), Arg237, and 254 to 255 (NR). A disulfide bridge connects residues Cys248 and Cys271. His306 is a Zn(2+) binding site. Substrate contacts are provided by residues 307–308 (SY) and Tyr358. The active-site Proton donor/acceptor is Glu380.

This sequence belongs to the peptidase M14 family. In terms of assembly, monomer. Zn(2+) is required as a cofactor.

The protein resides in the secreted. It catalyses the reaction Release of a C-terminal amino acid, but little or no action with -Asp, -Glu, -Arg, -Lys or -Pro.. Functionally, carboxypeptidase that catalyzes the release of a C-terminal amino acid, but has little or no action with -Asp, -Glu, -Arg, -Lys or -Pro. This chain is Carboxypeptidase A1 (Cpa1), found in Mus musculus (Mouse).